A 373-amino-acid chain; its full sequence is tRNA-specific 2-thiouridylase MnmA (373 aa).

ATP is bound by residues 12–19 (GMSGGVDS) and Met-38. The interaction with target base in tRNA stretch occupies residues 98-100 (NPD). Residue Cys-103 is the Nucleophile of the active site. Residues Cys-103 and Cys-200 are joined by a disulfide bond. Gly-127 contacts ATP. The interaction with tRNA stretch occupies residues 150 to 152 (KDQ). Cys-200 serves as the catalytic Cysteine persulfide intermediate. The tract at residues 312–313 (RY) is interaction with tRNA.

This sequence belongs to the MnmA/TRMU family.

It localises to the cytoplasm. It carries out the reaction S-sulfanyl-L-cysteinyl-[protein] + uridine(34) in tRNA + AH2 + ATP = 2-thiouridine(34) in tRNA + L-cysteinyl-[protein] + A + AMP + diphosphate + H(+). Functionally, catalyzes the 2-thiolation of uridine at the wobble position (U34) of tRNA, leading to the formation of s(2)U34. This chain is tRNA-specific 2-thiouridylase MnmA, found in Streptococcus pyogenes serotype M49 (strain NZ131).